The following is a 338-amino-acid chain: Large ribosomal subunit protein uL10 (338 aa).

The segment covering 298-308 has biased composition (low complexity); sequence AAQQTQTQQST. The tract at residues 298–338 is disordered; it reads AAQQTQTQQSTAEEKKEEKKEEEKKGPSEEEIGSGLASLFG. Residues 309–325 are compositionally biased toward basic and acidic residues; the sequence is AEEKKEEKKEEEKKGPS.

Belongs to the universal ribosomal protein uL10 family. Part of the 50S ribosomal subunit. Forms part of the ribosomal stalk which helps the ribosome interact with GTP-bound translation factors. Forms a heptameric L10(L12)2(L12)2(L12)2 complex, where L10 forms an elongated spine to which the L12 dimers bind in a sequential fashion.

Forms part of the ribosomal stalk, playing a central role in the interaction of the ribosome with GTP-bound translation factors. This Saccharolobus islandicus (strain M.16.27) (Sulfolobus islandicus) protein is Large ribosomal subunit protein uL10.